A 129-amino-acid polypeptide reads, in one-letter code: NADH dehydrogenase [ubiquinone] 1 beta subcomplex subunit 4 (129 aa).

At Ser-2 the chain carries N-acetylserine. Ser-26 carries the phosphoserine modification. Residues 88–105 (LMGALCGFGPLIFIYYII) form a helical membrane-spanning segment.

It belongs to the complex I NDUFB4 subunit family. In terms of assembly, complex I is composed of 45 different subunits.

The protein localises to the mitochondrion inner membrane. Accessory subunit of the mitochondrial membrane respiratory chain NADH dehydrogenase (Complex I), that is believed not to be involved in catalysis. Complex I functions in the transfer of electrons from NADH to the respiratory chain. The immediate electron acceptor for the enzyme is believed to be ubiquinone. This chain is NADH dehydrogenase [ubiquinone] 1 beta subcomplex subunit 4 (NDUFB4), found in Gorilla gorilla gorilla (Western lowland gorilla).